The following is a 528-amino-acid chain: Arginine--tRNA ligase (528 aa).

A 'HIGH' region motif is present at residues 112 to 122; that stretch reads ANPTGPLHIGH.

It belongs to the class-I aminoacyl-tRNA synthetase family. As to quaternary structure, monomer.

It is found in the cytoplasm. It catalyses the reaction tRNA(Arg) + L-arginine + ATP = L-arginyl-tRNA(Arg) + AMP + diphosphate. The sequence is that of Arginine--tRNA ligase from Wolinella succinogenes (strain ATCC 29543 / DSM 1740 / CCUG 13145 / JCM 31913 / LMG 7466 / NCTC 11488 / FDC 602W) (Vibrio succinogenes).